The following is a 337-amino-acid chain: DNA-directed RNA polymerase subunit alpha (337 aa).

Residues 1 to 233 are alpha N-terminal domain (alpha-NTD); sequence MVREDVVGST…DLLIPFLHAE (233 aa). The alpha C-terminal domain (alpha-CTD) stretch occupies residues 265 to 337; that stretch reads KGIPLTCIFI…FAINLLNKKL (73 aa).

Belongs to the RNA polymerase alpha chain family. In terms of assembly, in plastids the minimal PEP RNA polymerase catalytic core is composed of four subunits: alpha, beta, beta', and beta''. When a (nuclear-encoded) sigma factor is associated with the core the holoenzyme is formed, which can initiate transcription.

It localises to the plastid. It is found in the chloroplast. The catalysed reaction is RNA(n) + a ribonucleoside 5'-triphosphate = RNA(n+1) + diphosphate. Its function is as follows. DNA-dependent RNA polymerase catalyzes the transcription of DNA into RNA using the four ribonucleoside triphosphates as substrates. The polypeptide is DNA-directed RNA polymerase subunit alpha (Phalaenopsis aphrodite subsp. formosana (Moth orchid)).